The primary structure comprises 317 residues: MTRQFLEFEQPIEELNQKIEALRMVGSDNEVNLSEEIARLEAKCSELTENIFSRLEPWQIAQMARHPLRPQTTDYIERIFTDFQELHGDRSYSSAPAIIGGMARLNGEPVMVLGHQKGKRTKEKVYRNFGMARPEEYRKALRLMRMAEKFKMPVVTFIDTAGAYPGIGAEERNQSEAIARNLFAMSRIKTPIVCIVTGEAGSGGALAIGVGDKIIMLQFSIYSVISPEGCASILWKDASKASEAARAMGITADRIFENELVDMVVPEPLGGAHRDVDEMASRLKRLLTSELQALKKVPLDQLIELRYQKFMAMGACD.

Residues Asn32 to Ala293 enclose the CoA carboxyltransferase C-terminal domain.

The protein belongs to the AccA family. As to quaternary structure, acetyl-CoA carboxylase is a heterohexamer composed of biotin carboxyl carrier protein (AccB), biotin carboxylase (AccC) and two subunits each of ACCase subunit alpha (AccA) and ACCase subunit beta (AccD).

It localises to the cytoplasm. The catalysed reaction is N(6)-carboxybiotinyl-L-lysyl-[protein] + acetyl-CoA = N(6)-biotinyl-L-lysyl-[protein] + malonyl-CoA. It participates in lipid metabolism; malonyl-CoA biosynthesis; malonyl-CoA from acetyl-CoA: step 1/1. In terms of biological role, component of the acetyl coenzyme A carboxylase (ACC) complex. First, biotin carboxylase catalyzes the carboxylation of biotin on its carrier protein (BCCP) and then the CO(2) group is transferred by the carboxyltransferase to acetyl-CoA to form malonyl-CoA. This is Acetyl-coenzyme A carboxylase carboxyl transferase subunit alpha from Legionella pneumophila (strain Paris).